We begin with the raw amino-acid sequence, 147 residues long: UPF0178 protein VP2328 (147 aa).

Belongs to the UPF0178 family.

The polypeptide is UPF0178 protein VP2328 (Vibrio parahaemolyticus serotype O3:K6 (strain RIMD 2210633)).